Here is a 698-residue protein sequence, read N- to C-terminus: Sialic acid-binding Ig-like lectin 11 (698 aa).

Positions 1–27 (MVPGQAQPQSPEMLLLPLLLPVLGAGS) are cleaved as a signal peptide. Topologically, residues 28–561 (LNKDPSYSLQ…KLEHGGGLGL (534 aa)) are extracellular. One can recognise an Ig-like V-type domain in the interval 31-134 (DPSYSLQVQR…DEAWYFFRVE (104 aa)). 3 disulfides stabilise this stretch: Cys49-Cys186, Cys54-Cys114, and Cys177-Cys228. 2 N-linked (GlcNAc...) asparagine glycosylation sites follow: Asn55 and Asn90. Arg132 lines the N-acetylneuraminate pocket. Ig-like C2-type domains are found at residues 159–244 (PDVY…RTVR), 251–350 (PKDL…LDLS), and 355–452 (PENL…LSLS). Asn262 carries N-linked (GlcNAc...) asparagine glycosylation. Residues Cys287 and Cys334 are joined by a disulfide bond. 2 N-linked (GlcNAc...) asparagine glycosylation sites follow: Asn366 and Asn375. An intrachain disulfide couples Cys391 to Cys436. N-linked (GlcNAc...) asparagine glycosylation is found at Asn497 and Asn515. Residues 562 to 584 (GAALGAGVAALLAFCSCLVVFRV) form a helical membrane-spanning segment. Topologically, residues 585–698 (KICRKEARKR…EREMSGMVPK (114 aa)) are cytoplasmic. The segment at 596–635 (AAEQDVPSTLGPISQGHQHECSAGSSQDHPPPGAATYTPG) is disordered. The ITIM motif motif lies at 642–647 (LHYASL). The residue at position 668 (Tyr668) is a Phosphotyrosine. The tract at residues 675-698 (TGQPLRGPGFGLQLEREMSGMVPK) is disordered.

Belongs to the immunoglobulin superfamily. SIGLEC (sialic acid binding Ig-like lectin) family. In terms of assembly, interacts with PTPN6/SHP-1 and PTPN11/SHP-2 upon phosphorylation. Post-translationally, phosphorylated on tyrosine residues. Expressed by macrophages in various tissues including Kupffer cells. Also found in brain microglia.

Its subcellular location is the membrane. In terms of biological role, putative adhesion molecule that mediates sialic-acid dependent binding to cells. Preferentially binds to alpha-2,8-linked sialic acid. The sialic acid recognition site may be masked by cis interactions with sialic acids on the same cell surface. In the immune response, may act as an inhibitory receptor upon ligand induced tyrosine phosphorylation by recruiting cytoplasmic phosphatase(s) via their SH2 domain(s) that block signal transduction through dephosphorylation of signaling molecules. This is Sialic acid-binding Ig-like lectin 11 (SIGLEC11) from Homo sapiens (Human).